We begin with the raw amino-acid sequence, 404 residues long: Argininosuccinate synthase (404 aa).

Residue 9–17 coordinates ATP; it reads AYSGGLDTS. Position 86 (Y86) interacts with L-citrulline. An ATP-binding site is contributed by G116. L-aspartate contacts are provided by T118, N122, and D123. N122 is an L-citrulline binding site. L-citrulline contacts are provided by R126, S174, S183, E259, and Y271.

It belongs to the argininosuccinate synthase family. Type 1 subfamily. As to quaternary structure, homotetramer.

Its subcellular location is the cytoplasm. It catalyses the reaction L-citrulline + L-aspartate + ATP = 2-(N(omega)-L-arginino)succinate + AMP + diphosphate + H(+). The protein operates within amino-acid biosynthesis; L-arginine biosynthesis; L-arginine from L-ornithine and carbamoyl phosphate: step 2/3. This chain is Argininosuccinate synthase, found in Listeria monocytogenes serotype 4b (strain CLIP80459).